We begin with the raw amino-acid sequence, 1279 residues long: ATP-dependent helicase/nuclease subunit A (1279 aa).

Residues 4–499 (TKWTDEQRQA…VKLFKNFRSR (496 aa)) form the UvrD-like helicase ATP-binding domain. Residue 25–32 (AGAGAGKT) participates in ATP binding. One can recognise a UvrD-like helicase C-terminal domain in the interval 526–853 (EEALKVGASY…RIMSIHKSKG (328 aa)).

This sequence belongs to the helicase family. AddA subfamily. Heterodimer of AddA and AddB/RexB. Mg(2+) is required as a cofactor.

It catalyses the reaction Couples ATP hydrolysis with the unwinding of duplex DNA by translocating in the 3'-5' direction.. The catalysed reaction is ATP + H2O = ADP + phosphate + H(+). Its function is as follows. The heterodimer acts as both an ATP-dependent DNA helicase and an ATP-dependent, dual-direction single-stranded exonuclease. Recognizes the chi site generating a DNA molecule suitable for the initiation of homologous recombination. The AddA nuclease domain is required for chi fragment generation; this subunit has the helicase and 3' -&gt; 5' nuclease activities. This chain is ATP-dependent helicase/nuclease subunit A, found in Clostridium botulinum (strain Langeland / NCTC 10281 / Type F).